The following is a 368-amino-acid chain: Phosphate acyltransferase (368 aa).

This sequence belongs to the PlsX family. As to quaternary structure, homodimer. Probably interacts with PlsY.

It is found in the cytoplasm. It carries out the reaction a fatty acyl-[ACP] + phosphate = an acyl phosphate + holo-[ACP]. It functions in the pathway lipid metabolism; phospholipid metabolism. Functionally, catalyzes the reversible formation of acyl-phosphate (acyl-PO(4)) from acyl-[acyl-carrier-protein] (acyl-ACP). This enzyme utilizes acyl-ACP as fatty acyl donor, but not acyl-CoA. The chain is Phosphate acyltransferase from Granulibacter bethesdensis (strain ATCC BAA-1260 / CGDNIH1).